We begin with the raw amino-acid sequence, 406 residues long: Cysteine desulfurase (406 aa).

The residue at position 226 (Lys-226) is an N6-(pyridoxal phosphate)lysine. The active-site Cysteine persulfide intermediate is Cys-364.

It belongs to the class-V pyridoxal-phosphate-dependent aminotransferase family. Csd subfamily. Homodimer. Interacts with SufE and the SufBCD complex composed of SufB, SufC and SufD. The interaction with SufE is required to mediate the direct transfer of the sulfur atom from the S-sulfanylcysteine. Requires pyridoxal 5'-phosphate as cofactor.

It is found in the cytoplasm. It catalyses the reaction (sulfur carrier)-H + L-cysteine = (sulfur carrier)-SH + L-alanine. The catalysed reaction is L-selenocysteine + AH2 = hydrogenselenide + L-alanine + A + H(+). Its pathway is cofactor biosynthesis; iron-sulfur cluster biosynthesis. In terms of biological role, cysteine desulfurases mobilize the sulfur from L-cysteine to yield L-alanine, an essential step in sulfur metabolism for biosynthesis of a variety of sulfur-containing biomolecules. Component of the suf operon, which is activated and required under specific conditions such as oxidative stress and iron limitation. Acts as a potent selenocysteine lyase in vitro, that mobilizes selenium from L-selenocysteine. Selenocysteine lyase activity is however unsure in vivo. This chain is Cysteine desulfurase, found in Escherichia coli O8 (strain IAI1).